The chain runs to 506 residues: MLWFQGAIPAAIASAKRSGAVFVVFVAGDDEQSIQMAASWEDEKVTQASSNNFVAIKIDTKSEACLQFSQIYPVVCVPSSFFIGDSGIPLEVIAGSVSADELVTRIHKVQQMHSSKGEASVTNDNQSESSVSTPSASFEPDVCENPESKNTELCETPATSDIKSDTATGGECTGHDSHSQEPHGCSNQRPAEDLTVRVERLTKKLEERREEKRKEEAQREIKKEIERRKTGKEMLDYKRKQEEELTKRMLEERSREKAEDRAARERIKQQIALDRAERAARFAKTKEAEAAKAAALLTKQAGTEVKRESTARDRSTIARIQFRLPDGSSFTNQFPSDAPLEEARQFAAQTVGNTYGNFSLATMFPRREFTREDYKRRLLDLELAPSASVVLLPAGRPATSIVHSSSGDIWTLLGTVLYPFLAIWRLISNFLFSNPPPAQTSARATSTEPSNSASSSKSEKREPVRKRMLEKRGEDFKKEGKIYRLRTQDDGEDENNTWNGNSTQQM.

The segment at 1-199 is interaction with UBQLN1; that stretch reads MLWFQGAIPA…PAEDLTVRVE (199 aa). Residues 1 to 411 lie on the Cytoplasmic side of the membrane; the sequence is MLWFQGAIPA…VHSSSGDIWT (411 aa). The segment at 110 to 194 is disordered; sequence QQMHSSKGEA…CSNQRPAEDL (85 aa). Composition is skewed to polar residues over residues 120-136 and 153-167; these read SVTNDNQSESSVSTPSA and LCETPATSDIKSDTA. A UBX domain is found at 313 to 391; it reads DRSTIARIQF…ELAPSASVVL (79 aa). Residues 412–432 lie within the membrane without spanning it; it reads LLGTVLYPFLAIWRLISNFLF. Topologically, residues 433 to 506 are cytoplasmic; it reads SNPPPAQTSA…TWNGNSTQQM (74 aa). A disordered region spans residues 437–506; the sequence is PAQTSARATS…TWNGNSTQQM (70 aa). A compositionally biased stretch (low complexity) spans 444-456; it reads ATSTEPSNSASSS. Over residues 457-489 the composition is skewed to basic and acidic residues; the sequence is KSEKREPVRKRMLEKRGEDFKKEGKIYRLRTQD. Phosphothreonine is present on threonine 487. The span at 496–506 shows a compositional bias: polar residues; it reads NTWNGNSTQQM.

Directly interacts with VCP. Interacts with UBQLN1. Forms a complex with VCP and UBQLN1. Expressed in many tissues, including brain, heart, kidney, liver, muscle and spleen (at protein level).

The protein resides in the endoplasmic reticulum membrane. It localises to the nucleus envelope. In terms of biological role, involved in endoplasmic reticulum-associated protein degradation (ERAD). Acts as a platform to recruit both UBQLN1 and VCP to the ER during ERAD. In Mus musculus (Mouse), this protein is UBX domain-containing protein 4 (Ubxn4).